We begin with the raw amino-acid sequence, 202 residues long: MPGQQRRGGGSGGSDRRERRDRSGSGPAQEKNAYVERVVAINRVAKVVKGGRRFSFTALVVVGDADGTVGVGYGKAKEVPAAIAKGVEEAKKHFFKVPRIGSTIPHPVQGEEAAGVVLLKPASPGTGVIAGGPVRAVLECAGVHDVLSKSLGSSNPINIVHATVAALRGLMRPEEIAARRGLPLEDVAPPAMLRARAAGASV.

Gly residues predominate over residues Met-1–Gly-13. The disordered stretch occupies residues Met-1–Lys-31. Residues Ser-14–Ser-23 show a composition bias toward basic and acidic residues. One can recognise an S5 DRBM domain in the interval Tyr-34–Val-97.

The protein belongs to the universal ribosomal protein uS5 family. Part of the 30S ribosomal subunit. Contacts proteins S4 and S8.

Its function is as follows. With S4 and S12 plays an important role in translational accuracy. Located at the back of the 30S subunit body where it stabilizes the conformation of the head with respect to the body. This is Small ribosomal subunit protein uS5 from Frankia casuarinae (strain DSM 45818 / CECT 9043 / HFP020203 / CcI3).